The chain runs to 102 residues: Large ribosomal subunit protein bL21 (102 aa).

Belongs to the bacterial ribosomal protein bL21 family. Part of the 50S ribosomal subunit. Contacts protein L20.

In terms of biological role, this protein binds to 23S rRNA in the presence of protein L20. The protein is Large ribosomal subunit protein bL21 of Pseudarthrobacter chlorophenolicus (strain ATCC 700700 / DSM 12829 / CIP 107037 / JCM 12360 / KCTC 9906 / NCIMB 13794 / A6) (Arthrobacter chlorophenolicus).